We begin with the raw amino-acid sequence, 1043 residues long: Calcium-transporting ATPase 1, plasma membrane-type (1043 aa).

The Cytoplasmic portion of the chain corresponds to 1 to 178 (MSFIRKKSME…FLWDASQDMT (178 aa)). Transmembrane regions (helical) follow at residues 179-199 (LLLL…TEGW) and 202-222 (GMYD…ITAA). At 223 to 258 (SDYKQSLQFRDLDKEKKKIDVQVTRDGYRQKVSIYD) the chain is on the cytoplasmic side. A run of 2 helical transmembrane segments spans residues 259 to 279 (IVVG…DGLF) and 356 to 376 (VATI…TVLM). Over 377–395 (ARFLLGKAGAPGGLLRWRM) the chain is Cytoplasmic. The helical transmembrane segment at 396–416 (VDALAVLNFFAVAVTIIVVAV) threads the bilayer. Asp-460 serves as the catalytic 4-aspartylphosphate intermediate. Residues Asp-761 and Asp-765 each contribute to the Mg(2+) site. A helical membrane pass occupies residues 824–844 (LTVNVVALMVNFISASFTGSA). Residue Pro-845 is a topological domain, cytoplasmic. 2 helical membrane-spanning segments follow: residues 846 to 866 (LTIV…ALAL) and 891 to 911 (VMWR…GVLL). Topologically, residues 912–955 (LRGKSLLQINGPQADSLLNTFVFNTFVFCQVFNEVNSREMEKIN) are cytoplasmic. A run of 2 helical transmembrane segments spans residues 956–976 (VFSG…TAGF) and 998–1018 (WLTS…LKCI). At 1019 to 1043 (PVESGSDASDRHDGYRPIPTGPSAV) the chain is on the cytoplasmic side. The tract at residues 1023–1043 (GSDASDRHDGYRPIPTGPSAV) is disordered.

The protein belongs to the cation transport ATPase (P-type) (TC 3.A.3) family. Type IIB subfamily.

The protein localises to the membrane. It catalyses the reaction Ca(2+)(in) + ATP + H2O = Ca(2+)(out) + ADP + phosphate + H(+). With respect to regulation, activated by calmodulin. This magnesium-dependent enzyme catalyzes the hydrolysis of ATP coupled with the translocation of calcium from the cytosol out of the cell, into the endoplasmic reticulum, or into organelles. This chain is Calcium-transporting ATPase 1, plasma membrane-type, found in Oryza sativa subsp. japonica (Rice).